Reading from the N-terminus, the 190-residue chain is Ribosome hibernation promotion factor (190 aa).

It belongs to the HPF/YfiA ribosome-associated protein family. Long HPF subfamily. In terms of assembly, interacts with 100S ribosomes.

It is found in the cytoplasm. In terms of biological role, required for dimerization of active 70S ribosomes into 100S ribosomes in stationary phase; 100S ribosomes are translationally inactive and sometimes present during exponential growth. The polypeptide is Ribosome hibernation promotion factor (Staphylococcus saprophyticus subsp. saprophyticus (strain ATCC 15305 / DSM 20229 / NCIMB 8711 / NCTC 7292 / S-41)).